A 285-amino-acid polypeptide reads, in one-letter code: Chitinase 4 (285 aa).

The signal sequence occupies residues 1–27 (MAAKMATMVALVFGLALLLSAAAPAAA). Residues 28-62 (QNCGCQDGYCCSQWGYCGTTEAYCGQGCQSGPCWG) form the Chitin-binding type-1 domain. 7 disulfides stabilise this stretch: Cys30–Cys38, Cys32–Cys44, Cys37–Cys51, Cys55–Cys60, Cys104–Cys153, Cys166–Cys175, and Cys253–Cys285. The active-site Proton donor is the Glu148.

Belongs to the glycosyl hydrolase 19 family. Chitinase class IV subfamily. As to expression, expressed at low levels in leaves, sheaths and meristems.

It carries out the reaction Random endo-hydrolysis of N-acetyl-beta-D-glucosaminide (1-&gt;4)-beta-linkages in chitin and chitodextrins.. In terms of biological role, hydrolyzes chitin and may function in reproductive organs during embryogenesis and seed maturation. In Oryza sativa subsp. japonica (Rice), this protein is Chitinase 4 (Cht4).